The primary structure comprises 356 residues: GTPase Obg (356 aa).

The region spanning 1–159 (MKFLDEAKVY…RWIWLRMKLI (159 aa)) is the Obg domain. The region spanning 160 to 327 (ADAGLVGLPN…ALRKLADVIS (168 aa)) is the OBG-type G domain. GTP contacts are provided by residues 166-173 (GLPNAGKS), 191-195 (FTTLH), 212-215 (DIPG), 279-282 (NKID), and 308-310 (SGA). Positions 173 and 193 each coordinate Mg(2+). The segment at 332-356 (SIKAKSTSDSAATEEPWAAPLPPQG) is disordered.

This sequence belongs to the TRAFAC class OBG-HflX-like GTPase superfamily. OBG GTPase family. As to quaternary structure, monomer. Mg(2+) is required as a cofactor.

Its subcellular location is the cytoplasm. Its function is as follows. An essential GTPase which binds GTP, GDP and possibly (p)ppGpp with moderate affinity, with high nucleotide exchange rates and a fairly low GTP hydrolysis rate. Plays a role in control of the cell cycle, stress response, ribosome biogenesis and in those bacteria that undergo differentiation, in morphogenesis control. This Bradyrhizobium sp. (strain BTAi1 / ATCC BAA-1182) protein is GTPase Obg.